A 409-amino-acid polypeptide reads, in one-letter code: Arginine deiminase (409 aa).

Residue Cys398 is the Amidino-cysteine intermediate of the active site.

The protein belongs to the arginine deiminase family.

It is found in the cytoplasm. It carries out the reaction L-arginine + H2O = L-citrulline + NH4(+). It functions in the pathway amino-acid degradation; L-arginine degradation via ADI pathway; carbamoyl phosphate from L-arginine: step 1/2. In Metamycoplasma arthritidis (strain 158L3-1) (Mycoplasma arthritidis), this protein is Arginine deiminase.